Consider the following 821-residue polypeptide: Glycerol-3-phosphate acyltransferase (821 aa).

An HXXXXD motif motif is present at residues 310-315 (CHRSHM).

The protein belongs to the GPAT/DAPAT family.

It is found in the cell membrane. It catalyses the reaction sn-glycerol 3-phosphate + an acyl-CoA = a 1-acyl-sn-glycero-3-phosphate + CoA. It functions in the pathway phospholipid metabolism; CDP-diacylglycerol biosynthesis; CDP-diacylglycerol from sn-glycerol 3-phosphate: step 1/3. This is Glycerol-3-phosphate acyltransferase from Baumannia cicadellinicola subsp. Homalodisca coagulata.